The primary structure comprises 90 residues: DNA-directed RNA polymerase subunit Rpo5 (90 aa).

The protein belongs to the archaeal Rpo5/eukaryotic RPB5 RNA polymerase subunit family. As to quaternary structure, part of the RNA polymerase complex.

The protein localises to the cytoplasm. The catalysed reaction is RNA(n) + a ribonucleoside 5'-triphosphate = RNA(n+1) + diphosphate. DNA-dependent RNA polymerase (RNAP) catalyzes the transcription of DNA into RNA using the four ribonucleoside triphosphates as substrates. This chain is DNA-directed RNA polymerase subunit Rpo5, found in Aeropyrum pernix (strain ATCC 700893 / DSM 11879 / JCM 9820 / NBRC 100138 / K1).